The primary structure comprises 689 residues: DNA ligase (689 aa).

NAD(+) contacts are provided by residues 58 to 62, 107 to 108, and Glu138; these read DQEYD and SL. The N6-AMP-lysine intermediate role is filled by Lys140. NAD(+) contacts are provided by Arg161, Glu198, Lys314, and Lys338. Zn(2+)-binding residues include Cys432, Cys435, Cys448, and Cys453. In terms of domain architecture, BRCT spans 611 to 689; sequence ASSGTLSGKT…QELLEMLHGG (79 aa).

This sequence belongs to the NAD-dependent DNA ligase family. LigA subfamily. It depends on Mg(2+) as a cofactor. The cofactor is Mn(2+).

The enzyme catalyses NAD(+) + (deoxyribonucleotide)n-3'-hydroxyl + 5'-phospho-(deoxyribonucleotide)m = (deoxyribonucleotide)n+m + AMP + beta-nicotinamide D-nucleotide.. Functionally, DNA ligase that catalyzes the formation of phosphodiester linkages between 5'-phosphoryl and 3'-hydroxyl groups in double-stranded DNA using NAD as a coenzyme and as the energy source for the reaction. It is essential for DNA replication and repair of damaged DNA. This chain is DNA ligase, found in Methylacidiphilum infernorum (isolate V4) (Methylokorus infernorum (strain V4)).